The chain runs to 76 residues: Small ribosomal subunit protein bS18 (76 aa).

This sequence belongs to the bacterial ribosomal protein bS18 family. As to quaternary structure, part of the 30S ribosomal subunit. Forms a tight heterodimer with protein bS6.

Its function is as follows. Binds as a heterodimer with protein bS6 to the central domain of the 16S rRNA, where it helps stabilize the platform of the 30S subunit. This is Small ribosomal subunit protein bS18 from Stutzerimonas stutzeri (strain A1501) (Pseudomonas stutzeri).